The chain runs to 294 residues: 4-hydroxy-tetrahydrodipicolinate synthase (294 aa).

Thr-45 is a pyruvate binding site. Tyr-133 (proton donor/acceptor) is an active-site residue. Lys-161 (schiff-base intermediate with substrate) is an active-site residue. Position 203 (Ile-203) interacts with pyruvate.

The protein belongs to the DapA family. As to quaternary structure, homotetramer; dimer of dimers.

Its subcellular location is the cytoplasm. It carries out the reaction L-aspartate 4-semialdehyde + pyruvate = (2S,4S)-4-hydroxy-2,3,4,5-tetrahydrodipicolinate + H2O + H(+). Its pathway is amino-acid biosynthesis; L-lysine biosynthesis via DAP pathway; (S)-tetrahydrodipicolinate from L-aspartate: step 3/4. In terms of biological role, catalyzes the condensation of (S)-aspartate-beta-semialdehyde [(S)-ASA] and pyruvate to 4-hydroxy-tetrahydrodipicolinate (HTPA). This Buchnera aphidicola subsp. Schizaphis graminum (strain Sg) protein is 4-hydroxy-tetrahydrodipicolinate synthase.